The sequence spans 293 residues: Zinc finger protein 80 (293 aa).

2 consecutive C2H2-type zinc fingers follow at residues 69-91 (YKCKECGKVFNKNSLLVRHHQIH) and 97-119 (YECQECGKAFHEKVDFVRHMRIH). A C2H2-type 3; atypical zinc finger spans residues 125 to 147 (CKCVECGKVFNRRSHLLCYHQIH). C2H2-type zinc fingers lie at residues 153–175 (YECSECGKTFSYHSVFIQHRMTH), 181–203 (FGCKECGKTFYYNSSLTRHMKIH), 209–231 (YKCGECGKTFTYHSVFFRHSMTH), and 237–259 (YECKECGKGFYYSYSLTRHTRSH).

This sequence belongs to the krueppel C2H2-type zinc-finger protein family.

It is found in the nucleus. Functionally, may be involved in transcriptional regulation. In Macaca mulatta (Rhesus macaque), this protein is Zinc finger protein 80 (ZNF80).